The sequence spans 76 residues: Theta defensin subunit B (76 aa).

The N-terminal stretch at 1–22 (MRTFALLTAMLLLVALQPQAEA) is a signal peptide. Residues 23–64 (RQARADEAAAQQQPGADDQGMAHSFTRPENAALPLSESAKGL) constitute a propeptide that is removed on maturation. Residues 24–54 (QARADEAAAQQQPGADDQGMAHSFTRPENAA) are disordered. A compositionally biased stretch (low complexity) spans 30-44 (AAAQQQPGADDQGMA). A Cyclopeptide (Arg-Cys) (interchain with C-73 in subunit A); in form BTD-1 cross-link involves residue Arg65. Arg65 participates in a covalent cross-link: Cyclopeptide (Arg-Cys) (interchain with C-73 in subunit B); in form BTD-2. Cys68 and Cys73 form a disulfide bridge. Cys73 is covalently cross-linked (Cyclopeptide (Cys-Arg) (interchain with R-65 in subunit A); in form BTD-1). A Cyclopeptide (Cys-Arg) (interchain with R-65 in subunit B); in form BTD-2 cross-link involves residue Cys73. Residues 74-76 (QLL) constitute a propeptide that is removed on maturation.

It belongs to the alpha-defensin family. Theta subfamily. BTD-1 is a cyclic heterodimer composed of subunits A and B; disulfide-linked. BTD-2 is a cyclic homodimer composed of two subunits B; disulfide-linked. In terms of processing, forms a cyclic peptide with subunit A (BTD-1), or subunit B (BTD-2). An additional intersubunit disulfide bond is formed.

In terms of biological role, BTD-1 and BTD-2 have antimicrobial activity against the Gram-negative bacterium E.coli ML35, the Gram-positive bacterium S.aureus 502a, and the fungus C.albicans 16820. BTD-2 is more effective against E.coli than BTD-1. This is Theta defensin subunit B (BTDB) from Papio anubis (Olive baboon).